Consider the following 317-residue polypeptide: D-alanine--D-alanine ligase (317 aa).

One can recognise an ATP-grasp domain in the interval 104 to 303 (KRVWLQHGLP…YAELCVAILA (200 aa)). 130 to 185 (PDRLGLPLILKPPHEGSTVGITKVAACADMEQAYAAASHFDEVVLAEQFVRGRELT) provides a ligand contact to ATP. Mg(2+) contacts are provided by Asp-257, Glu-270, and Asn-272.

The protein belongs to the D-alanine--D-alanine ligase family. The cofactor is Mg(2+). Requires Mn(2+) as cofactor.

It localises to the cytoplasm. The catalysed reaction is 2 D-alanine + ATP = D-alanyl-D-alanine + ADP + phosphate + H(+). It functions in the pathway cell wall biogenesis; peptidoglycan biosynthesis. Its function is as follows. Cell wall formation. The chain is D-alanine--D-alanine ligase from Bordetella avium (strain 197N).